The following is a 3579-amino-acid chain: Protocadherin-like wing polarity protein stan (3579 aa).

An N-terminal signal peptide occupies residues 1–29 (MQTREFPQRPLGLLLVLLVVLLQSSLIKS). Over 30 to 2816 (YLIIVHEDTP…EPSLLVQITS (2787 aa)) the chain is Extracellular. N-linked (GlcNAc...) asparagine glycans are attached at residues Asn-46, Asn-179, and Asn-340. Cadherin domains are found at residues 360–464 (EQAL…SPTF), 465–581 (EAEQ…YPQF), 582–689 (SERT…APRF), 690–794 (YTSQ…DPAF), 795–897 (NPKY…APIF), 898–1007 (ENAP…APAF), 1008–1113 (KSPL…PPTF), and 1114–1220 (ASDK…APVL). An N-linked (GlcNAc...) asparagine glycan is attached at Asn-671. The N-linked (GlcNAc...) asparagine glycan is linked to Asn-886. Asn-1269, Asn-1374, and Asn-1441 each carry an N-linked (GlcNAc...) asparagine glycan. The region spanning 1482-1518 (EVDLCYSDPCQNGGTCVRREGGYTCVCPSTHTGQNCE) is the EGF-like 1; calcium-binding domain. Disulfide bonds link Cys-1486–Cys-1497, Cys-1491–Cys-1506, and Cys-1508–Cys-1517. One can recognise a Laminin G-like 1 domain in the interval 1556 to 1753 (LRARAFGRNS…VADNGTLAGC (198 aa)). Asn-1650, Asn-1678, and Asn-1747 each carry an N-linked (GlcNAc...) asparagine glycan. Disulfide bonds link Cys-1727/Cys-1753, Cys-1760/Cys-1771, Cys-1765/Cys-1780, and Cys-1782/Cys-1791. Residues 1756–1792 (KAPLCQSEPCFNGGTCREGWGTYSCECPEGYAGNSCQ) form the EGF-like 2; calcium-binding domain. The Laminin G-like 2 domain occupies 1796-1963 (PAPWRFSGDG…TIRENVEDGC (168 aa)). The N-linked (GlcNAc...) asparagine glycan is linked to Asn-1843. Cystine bridges form between Cys-1937/Cys-1963, Cys-1969/Cys-1979, Cys-1973/Cys-1988, and Cys-1990/Cys-1999. An EGF-like 3; calcium-binding domain is found at 1965–2000 (SRAQCPDHCPNHSSCQSSWDLSTCECDSGYVGTDCA). N-linked (GlcNAc...) asparagine glycosylation is present at Asn-1975. 4 N-linked (GlcNAc...) asparagine glycosylation sites follow: Asn-2016, Asn-2028, Asn-2071, and Asn-2088. 4 disulfide bridges follow: Cys-2092-Cys-2095, Cys-2097-Cys-2114, Cys-2116-Cys-2125, and Cys-2128-Cys-2140. The Laminin EGF-like domain occupies 2095-2142 (CDCYSIGSFSGACNPLTGQCECREGVIGRRCDSCSNPYAEVTLSGCEV). N-linked (GlcNAc...) asparagine glycosylation is found at Asn-2196 and Asn-2320. A compositionally biased stretch (basic and acidic residues) spans 2553–2562 (QETQRLEIPS). 3 disordered regions span residues 2553–2582 (QETQ…STEQ), 2610–2635 (HEIP…EREP), and 2654–2684 (VISP…GENE). A compositionally biased stretch (low complexity) spans 2567-2579 (SSSSPSSSSSSGS). A GAIN-B domain is found at 2653–2803 (EVISPDSPEM…AVIVDVIDPE (151 aa)). Intrachain disulfides connect Cys-2747–Cys-2785 and Cys-2762–Cys-2787. The interval 2747-2803 (CVRWNSFTNQWTRLGCQTEIPDFDGDFNPAAQQAILVNCSCTHISSYAVIVDVIDPE) is GPS. Asn-2784 carries an N-linked (GlcNAc...) asparagine glycan. The helical transmembrane segment at 2817–2837 (YSAFLVSLPLLLGVLLALALL) threads the bilayer. Over 2838–2845 (RGQQTNSN) the chain is Cytoplasmic. Residues 2846 to 2866 (TIHQNIVLCVFCAELLFFVGM) traverse the membrane as a helical segment. The Extracellular segment spans residues 2867-2883 (QSRRQLLESEFPCKLTA). The chain crosses the membrane as a helical span at residues 2884–2904 (ICLHYFWLAAFAWTTVDCVHL). Over 2905-2919 (YRMLTEMRDINHGPM) the chain is Cytoplasmic. Residues 2920–2940 (GFYFAMGYGAPAIVVGLSVGV) form a helical membrane-spanning segment. Topologically, residues 2941 to 2959 (RAHEYGNSLFCWLSVYEPV) are extracellular. Residues 2960-2980 (VWWLVGPIAGMSVVNLLILFV) traverse the membrane as a helical segment. The Cytoplasmic portion of the chain corresponds to 2981 to 3000 (SVKAAFTLKDHVLGFGNLRT). A helical membrane pass occupies residues 3001 to 3021 (LLWLSVVSLPLMGVMWVLAVL). Topologically, residues 3022–3031 (AASEHSQLLS) are extracellular. A helical membrane pass occupies residues 3032-3052 (LLLSGVVLLHALFCLIGYCII). Over 3053 to 3579 (NKRVRENLQR…RNIDDDETTV (527 aa)) the chain is Cytoplasmic. Disordered regions lie at residues 3111-3225 (GISA…TPAY), 3343-3377 (LYGR…SGSQ), 3458-3486 (YHQQ…YHFP), and 3499-3579 (LSHT…ETTV). Over residues 3113–3128 (SASSTTSRSTAKTSSS) the composition is skewed to low complexity. Residues 3167-3191 (RGGEEKPSRRQRKDSDSGSETDGRS) are compositionally biased toward basic and acidic residues. A phosphoserine mark is found at Ser-3199 and Ser-3200. A compositionally biased stretch (polar residues) spans 3208 to 3223 (ARSSGTHRSTAVSSTP). The segment covering 3343–3352 (LYGRRGEYPD) has biased composition (basic and acidic residues). The segment covering 3459–3468 (HQQQQQQQQH) has biased composition (low complexity). The span at 3469 to 3482 (HLQDRLSEGSDKNG) shows a compositional bias: basic and acidic residues. Residues 3501 to 3513 (HTQPPSLHGSQLM) are compositionally biased toward polar residues.

It belongs to the G-protein coupled receptor 2 family. In terms of assembly, interacts with ATP6AP2 (via N-terminus). As to expression, in the pupal wing, expressed at relatively even levels in all regions. Abundant in 6-9 hours embryos. Expressed at higher levels in pupae than larvae.

It localises to the cell membrane. The protein localises to the apical cell membrane. Functionally, involved in the fz signaling pathway that controls wing tissue polarity. Also mediates homophilic cell adhesion. May play a role in initiating prehair morphogenesis. May play a critical role in tissue polarity and in formation of normal dendrite fields. During planar cell polarity, stabilizes asymmetric PCP domains together with ATP6AP2. The chain is Protocadherin-like wing polarity protein stan (stan) from Drosophila melanogaster (Fruit fly).